Consider the following 240-residue polypeptide: Ubiquinone biosynthesis O-methyltransferase (240 aa).

S-adenosyl-L-methionine-binding residues include Arg44, Gly64, Asp85, and Met129.

The protein belongs to the methyltransferase superfamily. UbiG/COQ3 family.

The catalysed reaction is a 3-demethylubiquinol + S-adenosyl-L-methionine = a ubiquinol + S-adenosyl-L-homocysteine + H(+). The enzyme catalyses a 3-(all-trans-polyprenyl)benzene-1,2-diol + S-adenosyl-L-methionine = a 2-methoxy-6-(all-trans-polyprenyl)phenol + S-adenosyl-L-homocysteine + H(+). The protein operates within cofactor biosynthesis; ubiquinone biosynthesis. O-methyltransferase that catalyzes the 2 O-methylation steps in the ubiquinone biosynthetic pathway. This chain is Ubiquinone biosynthesis O-methyltransferase, found in Escherichia coli O7:K1 (strain IAI39 / ExPEC).